The sequence spans 460 residues: Cysteine--tRNA ligase (460 aa).

C29 contributes to the Zn(2+) binding site. Residues 31–41 (PTVYDFAHIGN) carry the 'HIGH' region motif. 3 residues coordinate Zn(2+): C227, H252, and E256. The 'KMSKS' region motif lies at 285-289 (KMSKS). K288 is a binding site for ATP.

The protein belongs to the class-I aminoacyl-tRNA synthetase family. In terms of assembly, monomer. Requires Zn(2+) as cofactor.

Its subcellular location is the cytoplasm. The catalysed reaction is tRNA(Cys) + L-cysteine + ATP = L-cysteinyl-tRNA(Cys) + AMP + diphosphate. This chain is Cysteine--tRNA ligase, found in Bradyrhizobium diazoefficiens (strain JCM 10833 / BCRC 13528 / IAM 13628 / NBRC 14792 / USDA 110).